The primary structure comprises 825 residues: Glycerol-3-phosphate acyltransferase 1, mitochondrial (825 aa).

Over 1–87 (MDESALTLGT…FFNPSIPSLG (87 aa)) the chain is Cytoplasmic. The important for mitochondrial localization stretch occupies residues 80–120 (NPSIPSLGLRNVIYINETHTRHRGWLARRLSYVLFIQERDV). An intramembrane segment occupies 88–118 (LRNVIYINETHTRHRGWLARRLSYVLFIQER). The Cytoplasmic portion of the chain corresponds to 119 to 825 (DVHKGMFATN…LEYILSLVVL (707 aa)). The HXXXXD motif motif lies at 230–235 (HRSHID). Residues Arg278, Arg279, Lys288, Arg293, and Arg328 each coordinate CoA. Ser380 carries the phosphoserine modification. The segment at 435 to 455 (SRPSGAADEGTDMSINESRNA) is disordered. Arg461 lines the CoA pocket. Ser685 and Ser692 each carry phosphoserine. An N6-acetyllysine mark is found at Lys777 and Lys781.

This sequence belongs to the GPAT/DAPAT family. Highly expressed in adipose tissues and lung. Low expression in liver.

It is found in the mitochondrion outer membrane. The enzyme catalyses sn-glycerol 3-phosphate + an acyl-CoA = a 1-acyl-sn-glycero-3-phosphate + CoA. It catalyses the reaction (9Z,12Z)-octadecadienoyl-CoA + sn-glycerol 3-phosphate = 1-(9Z,12Z)-octadecadienoyl-sn-glycero-3-phosphate + CoA. The catalysed reaction is sn-glycerol 3-phosphate + (9Z)-octadecenoyl-CoA = 1-(9Z-octadecenoyl)-sn-glycero-3-phosphate + CoA. It carries out the reaction sn-glycerol 3-phosphate + octadecanoyl-CoA = 1-octadecanoyl-sn-glycero-3-phosphate + CoA. The enzyme catalyses sn-glycerol 3-phosphate + hexadecanoyl-CoA = 1-hexadecanoyl-sn-glycero-3-phosphate + CoA. It catalyses the reaction dodecanoyl-CoA + sn-glycerol 3-phosphate = 1-dodecanoyl-sn-glycerol 3-phosphate + CoA. The catalysed reaction is 1-acyl-sn-glycero-3-phospho-(1'-sn-glycerol) + an acyl-CoA = a 1,2-diacyl-sn-glycero-3-phospho-(1'-sn-glycerol) + CoA. It participates in phospholipid metabolism; CDP-diacylglycerol biosynthesis; CDP-diacylglycerol from sn-glycerol 3-phosphate: step 1/3. Its function is as follows. Mitochondrial membrane protein that catalyzes the essential first step of biosynthesis of glycerolipids such as triglycerides, phosphatidic acids and lysophosphatidic acids. Esterifies acyl-group from acyl-coenzyme A (acyl-CoA) to the sn-1 position of glycerol-3-phosphate, to produce lysophosphatidic acid. Has a narrow hydrophobic binding cleft that selects for a linear acyl chain. Catalytic activity is higher for substrates with a 16-carbon acyl chain. The polypeptide is Glycerol-3-phosphate acyltransferase 1, mitochondrial (Bos taurus (Bovine)).